We begin with the raw amino-acid sequence, 577 residues long: Arginine--tRNA ligase (577 aa).

The short motif at 122–132 (PNVAKEMHVGH) is the 'HIGH' region element.

It belongs to the class-I aminoacyl-tRNA synthetase family. As to quaternary structure, monomer.

Its subcellular location is the cytoplasm. The enzyme catalyses tRNA(Arg) + L-arginine + ATP = L-arginyl-tRNA(Arg) + AMP + diphosphate. In Escherichia coli O8 (strain IAI1), this protein is Arginine--tRNA ligase.